We begin with the raw amino-acid sequence, 147 residues long: Protein SPMIP3 (147 aa).

The chain is Protein SPMIP3 from Homo sapiens (Human).